A 37-amino-acid chain; its full sequence is Large ribosomal subunit protein bL36 (37 aa).

It belongs to the bacterial ribosomal protein bL36 family.

The polypeptide is Large ribosomal subunit protein bL36 (Geobacter metallireducens (strain ATCC 53774 / DSM 7210 / GS-15)).